The chain runs to 311 residues: MEKYEKLEKVGEGTYGKVYKAMEKTTGKLVALKKTRLEMDEEGIPPTALREISLLQMLSQSIYIVRLLCVEHVIQSKDSTVSHSPKSNLYLVFEYLDTDLKKFIDSHRKGSNPRPLEASLVQRFMFQLFKGVAHCHSHGVLHRDLKPQNLLLDKDKGILKIADLGLSRAFTVPLKAYTHEIVTLWYRAPEVLLGSTHYSTAVDIWSVGCIFAEMIRRQALFPGDSEFQQLLHIFRLLGTPTEQQWPGVMALRDWHVYPKWEPQDLSRAVPSLSPEGIDLLTQMLKYNPAERISAKAALDHPYFDSLDKSQF.

In terms of domain architecture, Protein kinase spans 4-303 (YEKLEKVGEG…AKAALDHPYF (300 aa)). Residues 10-18 (VGEGTYGKV) and K33 contribute to the ATP site. At Y15 the chain carries Phosphotyrosine. The Proton acceptor role is filled by D144. Phosphothreonine is present on T178.

The protein belongs to the protein kinase superfamily. CMGC Ser/Thr protein kinase family. CDC2/CDKX subfamily. In terms of assembly, interacts with CKS1. Expressed in flowers.

The catalysed reaction is L-seryl-[protein] + ATP = O-phospho-L-seryl-[protein] + ADP + H(+). It carries out the reaction L-threonyl-[protein] + ATP = O-phospho-L-threonyl-[protein] + ADP + H(+). The enzyme catalyses [DNA-directed RNA polymerase] + ATP = phospho-[DNA-directed RNA polymerase] + ADP + H(+). Together with CDKB1-1, promotes both the last division in the stomatal cell lineage as well as the number of stomata. In collaboration with MYB124 and MYB88, restrict the G1/S transition and chloroplast and nuclear number during stomatal formation, and normally maintain fate and developmental progression throughout the stomatal cell lineage. This chain is Cyclin-dependent kinase B1-2 (CDKB1-2), found in Arabidopsis thaliana (Mouse-ear cress).